The sequence spans 360 residues: DNA replication and repair protein RecF (360 aa).

30 to 37 lines the ATP pocket; sequence GQNGSGKT.

It belongs to the RecF family.

Its subcellular location is the cytoplasm. Functionally, the RecF protein is involved in DNA metabolism; it is required for DNA replication and normal SOS inducibility. RecF binds preferentially to single-stranded, linear DNA. It also seems to bind ATP. The polypeptide is DNA replication and repair protein RecF (Shewanella baltica (strain OS185)).